A 141-amino-acid polypeptide reads, in one-letter code: Large ribosomal subunit protein uL11 (141 aa).

This sequence belongs to the universal ribosomal protein uL11 family. As to quaternary structure, part of the ribosomal stalk of the 50S ribosomal subunit. Interacts with L10 and the large rRNA to form the base of the stalk. L10 forms an elongated spine to which L12 dimers bind in a sequential fashion forming a multimeric L10(L12)X complex. In terms of processing, one or more lysine residues are methylated.

In terms of biological role, forms part of the ribosomal stalk which helps the ribosome interact with GTP-bound translation factors. This Latilactobacillus sakei subsp. sakei (strain 23K) (Lactobacillus sakei subsp. sakei) protein is Large ribosomal subunit protein uL11.